A 788-amino-acid chain; its full sequence is Patatin-like phospholipase domain-containing protein DEHA2B04136g (788 aa).

A helical transmembrane segment spans residues tryptophan 136 to valine 156. The PNPLA domain maps to leucine 311 to asparagine 503. Positions glycine 342–glycine 346 match the GXSXG motif. Catalysis depends on serine 344, which acts as the Nucleophile. Aspartate 490 (proton acceptor) is an active-site residue. The segment covering alanine 662–serine 672 has biased composition (polar residues). The interval alanine 662–phenylalanine 771 is disordered. Composition is skewed to acidic residues over residues methionine 690–valine 705 and glutamate 723–asparagine 749.

It belongs to the PLPL family.

It is found in the membrane. Its function is as follows. Probable lipid hydrolase. This Debaryomyces hansenii (strain ATCC 36239 / CBS 767 / BCRC 21394 / JCM 1990 / NBRC 0083 / IGC 2968) (Yeast) protein is Patatin-like phospholipase domain-containing protein DEHA2B04136g.